A 426-amino-acid polypeptide reads, in one-letter code: 3-phosphoshikimate 1-carboxyvinyltransferase (426 aa).

3-phosphoshikimate contacts are provided by Lys-22, Ser-23, and Arg-27. Lys-22 lines the phosphoenolpyruvate pocket. Phosphoenolpyruvate contacts are provided by Gly-96 and Arg-124. Residues Ser-170, Ser-171, Gln-172, Ser-198, Asp-314, Asn-337, and Lys-341 each coordinate 3-phosphoshikimate. Gln-172 contributes to the phosphoenolpyruvate binding site. Asp-314 functions as the Proton acceptor in the catalytic mechanism. Phosphoenolpyruvate contacts are provided by Arg-345, Arg-387, and Lys-412.

This sequence belongs to the EPSP synthase family. As to quaternary structure, monomer.

The protein resides in the cytoplasm. The enzyme catalyses 3-phosphoshikimate + phosphoenolpyruvate = 5-O-(1-carboxyvinyl)-3-phosphoshikimate + phosphate. Its pathway is metabolic intermediate biosynthesis; chorismate biosynthesis; chorismate from D-erythrose 4-phosphate and phosphoenolpyruvate: step 6/7. Catalyzes the transfer of the enolpyruvyl moiety of phosphoenolpyruvate (PEP) to the 5-hydroxyl of shikimate-3-phosphate (S3P) to produce enolpyruvyl shikimate-3-phosphate and inorganic phosphate. This chain is 3-phosphoshikimate 1-carboxyvinyltransferase, found in Shewanella sediminis (strain HAW-EB3).